Here is a 110-residue protein sequence, read N- to C-terminus: Insulin (110 aa).

The first 24 residues, 1–24 (MALWMRLLPLLAFLILWEPSPAHA), serve as a signal peptide directing secretion. 3 cysteine pairs are disulfide-bonded: Cys31–Cys96, Cys43–Cys109, and Cys95–Cys100. Residues 57-87 (GVDDPQMPQLELGGSPGAGDLRALALEVARQ) constitute a propeptide, c peptide.

Belongs to the insulin family. As to quaternary structure, heterodimer of a B chain and an A chain linked by two disulfide bonds.

Its subcellular location is the secreted. In terms of biological role, insulin decreases blood glucose concentration. It increases cell permeability to monosaccharides, amino acids and fatty acids. It accelerates glycolysis, the pentose phosphate cycle, and glycogen synthesis in liver. This Psammomys obesus (Fat sand rat) protein is Insulin (INS).